The primary structure comprises 160 residues: Putative antiporter subunit mnhE2 (160 aa).

The next 3 helical transmembrane spans lie at 22 to 42, 55 to 75, and 100 to 120; these read HFKFSTFFSGYLIGLIVIYIL, IWVAIKFLGVYLYQLITSSIS, and SDWAITFLTILIIITPGSTVI.

This sequence belongs to the CPA3 antiporters (TC 2.A.63) subunit E family. In terms of assembly, may form a heterooligomeric complex that consists of seven subunits: mnhA2, mnhB2, mnhC2, mnhD2, mnhE2, mnhF2 and mnhG2.

The protein resides in the cell membrane. The chain is Putative antiporter subunit mnhE2 (mnhE2) from Staphylococcus aureus (strain Mu3 / ATCC 700698).